The primary structure comprises 79 residues: UPF0180 protein BCB4264_A1446 (79 aa).

Belongs to the UPF0180 family.

This Bacillus cereus (strain B4264) protein is UPF0180 protein BCB4264_A1446.